Here is a 494-residue protein sequence, read N- to C-terminus: Glucose-6-phosphate exchanger SLC37A2 (494 aa).

A helical membrane pass occupies residues 20 to 37; that stretch reads YRFSILFLTFVFYTSYHL. N-linked (GlcNAc...) asparagine glycosylation is found at Asn-52, Asn-63, and Asn-67. A run of 11 helical transmembrane segments spans residues 85–105, 116–136, 146–166, 187–207, 208–228, 295–315, 327–347, 355–375, 384–404, 427–447, and 455–475; these read FGVLDNCFLVAYAVGMFFSGI, LSTGMLLSGLFTALFGLGFYW, LVQALNGLVQTTGWPAVVACV, SVGNILGSLIAGVYVSSAWGL, SFIVPGIIIASTGVICFLFLV, LCLLFAKLVSYTFLYWLPLYI, GDLSTLFDVGGILGGIVAGLV, ASTCCAMLIIAAPMLFLYNKI, VGMLLWCGALVNGPYALITTA, AIIDGTGSIGAAVGPLLAGLI, and VFYMLIAADVLACLLLSRLVY.

The protein belongs to the major facilitator superfamily. Organophosphate:Pi antiporter (OPA) (TC 2.A.1.4) family.

Its subcellular location is the endoplasmic reticulum membrane. The catalysed reaction is D-glucose 6-phosphate(in) + phosphate(out) = D-glucose 6-phosphate(out) + phosphate(in). Inorganic phosphate and glucose-6-phosphate antiporter. May transport cytoplasmic glucose-6-phosphate into the lumen of the endoplasmic reticulum and translocate inorganic phosphate into the opposite direction. The polypeptide is Glucose-6-phosphate exchanger SLC37A2 (Danio rerio (Zebrafish)).